The chain runs to 332 residues: Glycerol-3-phosphate dehydrogenase [NAD(P)+] (332 aa).

NADPH is bound by residues Trp-11, Arg-30, and Lys-108. Residues Lys-108, Gly-137, and Ser-139 each contribute to the sn-glycerol 3-phosphate site. Ala-141 contacts NADPH. 5 residues coordinate sn-glycerol 3-phosphate: Lys-192, Asp-245, Ser-255, Arg-256, and Asn-257. Lys-192 functions as the Proton acceptor in the catalytic mechanism. Arg-256 contacts NADPH. NADPH is bound by residues Val-280 and Glu-282.

The protein belongs to the NAD-dependent glycerol-3-phosphate dehydrogenase family.

Its subcellular location is the cytoplasm. The catalysed reaction is sn-glycerol 3-phosphate + NAD(+) = dihydroxyacetone phosphate + NADH + H(+). It catalyses the reaction sn-glycerol 3-phosphate + NADP(+) = dihydroxyacetone phosphate + NADPH + H(+). It functions in the pathway membrane lipid metabolism; glycerophospholipid metabolism. Its function is as follows. Catalyzes the reduction of the glycolytic intermediate dihydroxyacetone phosphate (DHAP) to sn-glycerol 3-phosphate (G3P), the key precursor for phospholipid synthesis. The sequence is that of Glycerol-3-phosphate dehydrogenase [NAD(P)+] from Burkholderia ambifaria (strain MC40-6).